The sequence spans 343 residues: Phenylalanine--tRNA ligase alpha subunit (343 aa).

A Mg(2+)-binding site is contributed by Glu-256.

The protein belongs to the class-II aminoacyl-tRNA synthetase family. Phe-tRNA synthetase alpha subunit type 1 subfamily. Tetramer of two alpha and two beta subunits. The cofactor is Mg(2+).

It localises to the cytoplasm. It catalyses the reaction tRNA(Phe) + L-phenylalanine + ATP = L-phenylalanyl-tRNA(Phe) + AMP + diphosphate + H(+). The protein is Phenylalanine--tRNA ligase alpha subunit of Aster yellows witches'-broom phytoplasma (strain AYWB).